The sequence spans 63 residues: Large ribosomal subunit protein bL32 (63 aa).

Belongs to the bacterial ribosomal protein bL32 family.

The chain is Large ribosomal subunit protein bL32 from Lacticaseibacillus paracasei (strain ATCC 334 / BCRC 17002 / CCUG 31169 / CIP 107868 / KCTC 3260 / NRRL B-441) (Lactobacillus paracasei).